The following is a 97-amino-acid chain: Mitochondrial import inner membrane translocase subunit Tim8 A (97 aa).

The Twin CX3C motif signature appears at 43–66 (CWEKCMDKPGPKLDSRAEACFVNC). 2 disulfides stabilise this stretch: Cys43–Cys66 and Cys47–Cys62. Phosphoserine occurs at positions 57, 87, 94, and 96.

This sequence belongs to the small Tim family. Heterohexamer; composed of 3 copies of TIMM8A and 3 copies of TIMM13, named soluble 70 kDa complex. Associates with the TIM22 complex, whose core is composed of TIMM22. In terms of tissue distribution, highly expressed in fetal and adult brain, followed by fetal lung, liver and kidney. Also expressed in heart, placenta, lung, liver, kidney, pancreas, skeletal muscle and heart.

It localises to the mitochondrion inner membrane. Mitochondrial intermembrane chaperone that participates in the import and insertion of some multi-pass transmembrane proteins into the mitochondrial inner membrane. Also required for the transfer of beta-barrel precursors from the TOM complex to the sorting and assembly machinery (SAM complex) of the outer membrane. Acts as a chaperone-like protein that protects the hydrophobic precursors from aggregation and guide them through the mitochondrial intermembrane space. The TIMM8-TIMM13 complex mediates the import of proteins such as TIMM23, SLC25A12/ARALAR1 and SLC25A13/ARALAR2, while the predominant TIMM9-TIMM10 70 kDa complex mediates the import of much more proteins. Probably necessary for normal neurologic development. This is Mitochondrial import inner membrane translocase subunit Tim8 A (TIMM8A) from Homo sapiens (Human).